A 152-amino-acid polypeptide reads, in one-letter code: Deoxyuridine 5'-triphosphate nucleotidohydrolase (152 aa).

Substrate is bound by residues 70–72 (RSG), Asn-83, 87–89 (TID), and Lys-97.

Belongs to the dUTPase family. It depends on Mg(2+) as a cofactor.

The catalysed reaction is dUTP + H2O = dUMP + diphosphate + H(+). Its pathway is pyrimidine metabolism; dUMP biosynthesis; dUMP from dCTP (dUTP route): step 2/2. Its function is as follows. This enzyme is involved in nucleotide metabolism: it produces dUMP, the immediate precursor of thymidine nucleotides and it decreases the intracellular concentration of dUTP so that uracil cannot be incorporated into DNA. This chain is Deoxyuridine 5'-triphosphate nucleotidohydrolase, found in Corynebacterium diphtheriae (strain ATCC 700971 / NCTC 13129 / Biotype gravis).